A 664-amino-acid chain; its full sequence is Probable L-type lectin-domain containing receptor kinase V.3 (664 aa).

The signal sequence occupies residues Met-1–Gly-26. Topologically, residues Arg-27–Leu-278 are extracellular. The legume-lectin like stretch occupies residues Leu-28 to Val-250. Residues Asn-69, Asn-116, Asn-122, Asn-174, and Asn-197 are each glycosylated (N-linked (GlcNAc...) asparagine). The helical transmembrane segment at Ile-279–Ile-299 threads the bilayer. At Val-300 to Leu-664 the chain is on the cytoplasmic side. In terms of domain architecture, Protein kinase spans Asn-335–Leu-617. ATP contacts are provided by residues Leu-341–Val-349 and Lys-364. Asp-461 acts as the Proton acceptor in catalysis.

This sequence in the C-terminal section; belongs to the protein kinase superfamily. Ser/Thr protein kinase family. The protein in the N-terminal section; belongs to the leguminous lectin family.

Its subcellular location is the cell membrane. The catalysed reaction is L-seryl-[protein] + ATP = O-phospho-L-seryl-[protein] + ADP + H(+). The enzyme catalyses L-threonyl-[protein] + ATP = O-phospho-L-threonyl-[protein] + ADP + H(+). The polypeptide is Probable L-type lectin-domain containing receptor kinase V.3 (LECRK53) (Arabidopsis thaliana (Mouse-ear cress)).